Here is a 1019-residue protein sequence, read N- to C-terminus: Pleckstrin homology domain-containing family M member 2 (1019 aa).

An N-acetylmethionine modification is found at Met1. The tract at residues 1–310 (MEPGEVKDRI…LDPPDACTEL (310 aa)) is interaction with KIF5B. Residues 36 to 158 (RNHDKVLQRL…IRFELDLDAP (123 aa)) form the RUN domain. Disordered stretches follow at residues 230 to 458 (SVPS…SEGL), 471 to 525 (SPST…REAQ), and 557 to 581 (QPSPCLSSAEDSGVDEGQGSPSEMV). 2 stretches are compositionally biased toward polar residues: residues 243-272 (DTVSGPRSTASDLTSSKASTRSPTQRQNPF) and 279-291 (TVSSSDTTPVHTT). The span at 315–327 (VTKKKKIGKKKKS) shows a compositional bias: basic residues. A compositionally biased stretch (polar residues) spans 417–427 (LNGQLDPSTWC). Ser441 carries the post-translational modification Phosphoserine. The segment covering 516-525 (PLEDTTREAQ) has biased composition (basic and acidic residues). An interaction with sifA region spans residues 762 to 885 (PCHCSPPEGT…VIPQGVAPSP (124 aa)). The 103-residue stretch at 771-873 (TITKEGMLHY…WMQHLCQAVS (103 aa)) folds into the PH domain.

Interacts with KLC2 (via TPR repeats). Interacts with KIF5B. Interacts with BORCS5. Interacts (via RUN domain) with ARL8B (GTP-bound form); PLEKHM1 and PLEKHM2 compete for interaction with ARL8B. Interacts with ARL8A. As to quaternary structure, (Microbial infection) Interacts with the S.typhimurium sifA protein; required for S.typhimurium infection.

It localises to the cytoplasm. The protein resides in the lysosome membrane. Plays a role in lysosomes movement and localization at the cell periphery acting as an effector of ARL8B. Required for ARL8B to exert its effects on lysosome location, recruits kinesin-1 to lysosomes and hence direct their movement toward microtubule plus ends. Binding to ARL8B provides a link from lysosomal membranes to plus-end-directed motility. Critical factor involved in NK cell-mediated cytotoxicity. Drives the polarization of cytolytic granules and microtubule-organizing centers (MTOCs) toward the immune synapse between effector NK lymphocytes and target cells. Required for maintenance of the Golgi apparatus organization. May play a role in membrane tubulation. This Homo sapiens (Human) protein is Pleckstrin homology domain-containing family M member 2.